Reading from the N-terminus, the 2273-residue chain is Acetyl-CoA carboxylase, mitochondrial (2273 aa).

The N-terminal 104 residues, 1-104, are a transit peptide targeting the mitochondrion; it reads KGKTITHGQS…RGNIHKHTRL (104 aa). One can recognise a Biotin carboxylation domain in the interval 134-635; sequence VISKILIANN…STGWLDDLIL (502 aa). The ATP-grasp domain occupies 292 to 484; the sequence is KTNFVSVPDD…LPATQLQIAM (193 aa). An ATP-binding site is contributed by 332–337; it reads GGGGKG. Residue Arg-459 is part of the active site. One can recognise a Biotinyl-binding domain in the interval 763-837; it reads LEAELNPTQV…EAGDVIAKLT (75 aa). An N6-biotinyllysine modification is found at Lys-804. The CoA carboxyltransferase N-terminal domain occupies 1532 to 1867; that stretch reads PYSVKDWLQP…KRDMSPPLLE (336 aa). A carboxyltransferase region spans residues 1532 to 2187; that stretch reads PYSVKDWLQP…EGQVIKRLQK (656 aa). Arg-1776, Lys-2080, and Arg-2082 together coordinate CoA. Residues 1871–2187 form the CoA carboxyltransferase C-terminal domain; it reads RWDRDVDFKP…EGQVIKRLQK (317 aa).

Requires biotin as cofactor.

Its subcellular location is the mitochondrion. It carries out the reaction hydrogencarbonate + acetyl-CoA + ATP = malonyl-CoA + ADP + phosphate + H(+). It catalyses the reaction N(6)-biotinyl-L-lysyl-[protein] + hydrogencarbonate + ATP = N(6)-carboxybiotinyl-L-lysyl-[protein] + ADP + phosphate + H(+). It participates in lipid metabolism; malonyl-CoA biosynthesis; malonyl-CoA from acetyl-CoA: step 1/1. Functionally, catalyzes the rate-limiting reaction in the mitochondrial fatty acid synthesis (FAS) type II pathway. Responsible for the production of the mitochondrial malonyl-CoA, used for the biosynthesis of the cofactor lipoic acid. This protein carries three functions: biotin carboxyl carrier protein, biotin carboxylase, and carboxyltransferase. The polypeptide is Acetyl-CoA carboxylase, mitochondrial (HFA1) (Saccharomyces cerevisiae (strain Lalvin EC1118 / Prise de mousse) (Baker's yeast)).